A 480-amino-acid polypeptide reads, in one-letter code: Uridine 5'-monophosphate synthase (480 aa).

Position 2 is an N-acetylalanine (Ala2). Positions 2–214 (AAVGAALGPL…VFVAANHNGS (213 aa)) are OPRTase. Tyr37 bears the Phosphotyrosine mark. The residue at position 214 (Ser214) is a Phosphoserine. The interval 215 to 220 (PLSIKE) is domain linker. Residues 221-480 (APKELSFSAR…WEAYLSRLGV (260 aa)) form an OMPdecase region. Ser257 is an orotidine 5'-phosphate binding site. UMP-binding positions include Ser257, Asp259, and 281–283 (KTH). Residues Lys281, Lys314, Asp317, Thr321, Ser372, 430–432 (QQY), and 450–451 (GR) contribute to the orotidine 5'-phosphate site. Catalysis depends on for OMPdecase activity residues Lys314 and Asp317. Residues Asp317, Thr321, Ser372, 430-432 (QQY), and 450-451 (GR) each bind UMP.

The protein in the N-terminal section; belongs to the purine/pyrimidine phosphoribosyltransferase family. It in the C-terminal section; belongs to the OMP decarboxylase family. As to quaternary structure, homodimer; dimerization is required for enzymatic activity.

It catalyses the reaction orotidine 5'-phosphate + diphosphate = orotate + 5-phospho-alpha-D-ribose 1-diphosphate. It carries out the reaction orotidine 5'-phosphate + H(+) = UMP + CO2. It functions in the pathway pyrimidine metabolism; UMP biosynthesis via de novo pathway; UMP from orotate: step 1/2. The protein operates within pyrimidine metabolism; UMP biosynthesis via de novo pathway; UMP from orotate: step 2/2. Its function is as follows. Bifunctional enzyme catalyzing the last two steps of de novo pyrimidine biosynthesis, orotate phosphoribosyltransferase (OPRT), which converts orotate to orotidine-5'-monophosphate (OMP), and orotidine-5'-monophosphate decarboxylase (ODC), the terminal enzymatic reaction that decarboxylates OMP to uridine monophosphate (UMP). This Pongo abelii (Sumatran orangutan) protein is Uridine 5'-monophosphate synthase (UMPS).